The primary structure comprises 406 residues: MRTKTQKKSQEKTNLNLSGYNRMMKLITQTTDLEIALATLRNSDFVTIDTEFIRETTFWPQLCLIQLASPDTTVLIDPISQDIDLKPFFDLMVNKKIVKVFHAARQDIETIYHLGGVIPSPLFDTQIAGSICGFGDSISYDQIVQRCTGYQLDKSSRFTDWSFRPLSEKQLLYALADVTYLRDVYLLLKKQLEKNKRTHWMDDEIAVLLEPKTYDMPENEAWKKVKGKIKKPRELAVLQKIAAWRERKARQYNIPRRHIIKDECLIEIAIQQPKDEADLKRLRSLNKNWDKFSIAHTLIKAVHEGLEVDLATLPALPKHNPLNETSSAVIDLLKVLLKLVANENGIAPKIIATSNDLEKIANGCIKKNIPAMNGWRYEIFGQKAEQMLKGKIGFYLSNGKINTKQL.

Residues 26-193 (LITQTTDLEI…VYLLLKKQLE (168 aa)) enclose the 3'-5' exonuclease domain. In terms of domain architecture, HRDC spans 231 to 312 (KPRELAVLQK…HEGLEVDLAT (82 aa)).

Belongs to the RNase D family. A divalent metal cation is required as a cofactor.

It is found in the cytoplasm. It carries out the reaction Exonucleolytic cleavage that removes extra residues from the 3'-terminus of tRNA to produce 5'-mononucleotides.. Its function is as follows. Exonuclease involved in the 3' processing of various precursor tRNAs. Initiates hydrolysis at the 3'-terminus of an RNA molecule and releases 5'-mononucleotides. In Bartonella henselae (strain ATCC 49882 / DSM 28221 / CCUG 30454 / Houston 1) (Rochalimaea henselae), this protein is Ribonuclease D.